The chain runs to 608 residues: Amino-acid acetyltransferase, mitochondrial (608 aa).

An N-acetyltransferase domain is found at 402 to 604 (LNLITEHEKG…DICTRIEPSL (203 aa)).

Belongs to the acetyltransferase family.

The protein resides in the mitochondrion. The enzyme catalyses L-glutamate + acetyl-CoA = N-acetyl-L-glutamate + CoA + H(+). It participates in amino-acid biosynthesis; L-arginine biosynthesis; N(2)-acetyl-L-ornithine from L-glutamate: step 1/4. Functionally, N-acetylglutamate synthase involved in arginine biosynthesis. The protein is Amino-acid acetyltransferase, mitochondrial (ARG2) of Yarrowia lipolytica (strain CLIB 122 / E 150) (Yeast).